Reading from the N-terminus, the 187-residue chain is Large ribosomal subunit protein uL5 (187 aa).

It belongs to the universal ribosomal protein uL5 family. As to quaternary structure, part of the 50S ribosomal subunit; part of the 5S rRNA/L5/L18/L25 subcomplex. Contacts the 5S rRNA and the P site tRNA. Forms a bridge to the 30S subunit in the 70S ribosome.

Functionally, this is one of the proteins that bind and probably mediate the attachment of the 5S RNA into the large ribosomal subunit, where it forms part of the central protuberance. In the 70S ribosome it contacts protein S13 of the 30S subunit (bridge B1b), connecting the 2 subunits; this bridge is implicated in subunit movement. Contacts the P site tRNA; the 5S rRNA and some of its associated proteins might help stabilize positioning of ribosome-bound tRNAs. In Corynebacterium diphtheriae (strain ATCC 700971 / NCTC 13129 / Biotype gravis), this protein is Large ribosomal subunit protein uL5.